The following is a 74-amino-acid chain: Protein SlyX homolog (74 aa).

This sequence belongs to the SlyX family.

The sequence is that of Protein SlyX homolog from Aliivibrio fischeri (strain ATCC 700601 / ES114) (Vibrio fischeri).